A 242-amino-acid polypeptide reads, in one-letter code: Probable transcriptional regulatory protein BTH_I1015 (242 aa).

Belongs to the TACO1 family.

The protein resides in the cytoplasm. This Burkholderia thailandensis (strain ATCC 700388 / DSM 13276 / CCUG 48851 / CIP 106301 / E264) protein is Probable transcriptional regulatory protein BTH_I1015.